A 258-amino-acid chain; its full sequence is Thiazole synthase (258 aa).

Catalysis depends on K96, which acts as the Schiff-base intermediate with DXP. 1-deoxy-D-xylulose 5-phosphate contacts are provided by residues G157, 183–184, and 205–206; these read AG and NT.

It belongs to the ThiG family. In terms of assembly, homotetramer. Forms heterodimers with either ThiH or ThiS.

Its subcellular location is the cytoplasm. The catalysed reaction is [ThiS sulfur-carrier protein]-C-terminal-Gly-aminoethanethioate + 2-iminoacetate + 1-deoxy-D-xylulose 5-phosphate = [ThiS sulfur-carrier protein]-C-terminal Gly-Gly + 2-[(2R,5Z)-2-carboxy-4-methylthiazol-5(2H)-ylidene]ethyl phosphate + 2 H2O + H(+). The protein operates within cofactor biosynthesis; thiamine diphosphate biosynthesis. Functionally, catalyzes the rearrangement of 1-deoxy-D-xylulose 5-phosphate (DXP) to produce the thiazole phosphate moiety of thiamine. Sulfur is provided by the thiocarboxylate moiety of the carrier protein ThiS. In vitro, sulfur can be provided by H(2)S. The sequence is that of Thiazole synthase from Alkaliphilus metalliredigens (strain QYMF).